Consider the following 282-residue polypeptide: uncharacterized protein (282 aa).

Disordered stretches follow at residues 1 to 45 and 201 to 259; these read MPLE…EEDE and DRRR…KPWG. Residues 10–19 are compositionally biased toward basic and acidic residues; that stretch reads SEMKEFKEST. The span at 26-38 shows a compositional bias: polar residues; sequence SVSSEETLTQSMV. Basic and acidic residues predominate over residues 201–237; sequence DRRRKEDSKARSRLTRREEHSEHHRSGKSRRERERRS.

This is an uncharacterized protein from Ostreid herpesvirus 1 (isolate France) (OsHV-1).